The primary structure comprises 859 residues: Suppressor protein MPT5 (859 aa).

A disordered region spans residues Met-85–Thr-108. Positions Asn-86 to Thr-108 are enriched in low complexity. One can recognise a PUM-HD domain in the interval Asp-188–Ala-596. Pumilio repeat units lie at residues Pro-209–Glu-247, Gln-248–Gln-283, Thr-284–Lys-320, Glu-325–Asp-362, Ala-363–Val-400, Lys-401–Asn-438, Arg-439–Asn-474, and Asp-503–Lys-539. Residues Thr-620–Thr-658 are disordered. The segment covering Pro-628–Ala-645 has biased composition (basic residues). Ser-662, Ser-834, and Ser-838 each carry phosphoserine.

Its subcellular location is the cytoplasm. RNA-binding protein involved in post-transcriptional regulation. Negatively regulates expression of HO by binding to the 3'-UTR of HO mRNA. Predominantly binds to mRNAs encoding chromatin modifiers and spindle pole body components. Recognizes and binds to 5'-TGTAA[CT]A[AT]TA-3' in the 3'-UTR of target mRNAs. Multicopy suppressor of POP2 mutation. Required for high temperature growth. The protein is Suppressor protein MPT5 (MPT5) of Saccharomyces cerevisiae (strain ATCC 204508 / S288c) (Baker's yeast).